The sequence spans 439 residues: GTPase Obg (439 aa).

In terms of domain architecture, Obg spans 1 to 159; that stretch reads MAFVDQAQIE…RNLKLELKVL (159 aa). The 177-residue stretch at 160–336 folds into the OBG-type G domain; sequence ADVGLVGFPS…LMRLTADMLA (177 aa). Residues 166-173, 191-195, 213-216, 283-286, and 317-319 contribute to the GTP site; these read GFPSAGKS, FTTLS, DLPG, TKMD, and SSI. S173 and T193 together coordinate Mg(2+). Residues 338-357 form a disordered region; sequence APAPESYRPETKNDTSEKSY. Residues 344–354 are compositionally biased toward basic and acidic residues; it reads YRPETKNDTSE. The 82-residue stretch at 358-439 folds into the OCT domain; that stretch reads TFKPETHDFT…NSDFVFEFSE (82 aa).

It belongs to the TRAFAC class OBG-HflX-like GTPase superfamily. OBG GTPase family. In terms of assembly, monomer. Mg(2+) is required as a cofactor.

The protein resides in the cytoplasm. Functionally, an essential GTPase which binds GTP, GDP and possibly (p)ppGpp with moderate affinity, with high nucleotide exchange rates and a fairly low GTP hydrolysis rate. Plays a role in control of the cell cycle, stress response, ribosome biogenesis and in those bacteria that undergo differentiation, in morphogenesis control. The protein is GTPase Obg of Leuconostoc mesenteroides subsp. mesenteroides (strain ATCC 8293 / DSM 20343 / BCRC 11652 / CCM 1803 / JCM 6124 / NCDO 523 / NBRC 100496 / NCIMB 8023 / NCTC 12954 / NRRL B-1118 / 37Y).